The following is a 418-amino-acid chain: MSMFFYLFLLVLGLQATIHCAPHNSSEGKVTTCHLPQQNATLYKMPSINADFAFRLYRKLSVENPDLNIFFSPVSISAALAMLSFGSGSSTQTQILEVLGFNLTDTPVKELQQGFQHLICSLNFPNNELELQMGNAVFIGQQLKPLAKFLDDVKTLYETEVFSTDFSNVSAAQHEINSYVEKQTKGKIVGLIQDLKLNIIMILVNYIHFKAQWANPFRVSKTEESSNFSVDKSTTVQVPMMHQLEQYYHYVDVELNCTVLQMDYSANALALFVLPKEGHMEWVEAAMSSKTLKKWNHLLQKGWVELFVPKFSISATYDLGSTLQKMGMRDAFAESADFPGITKDNGLKLSYAFHKAVLHIGEEGTKEGASPEAGSLDQPEVAPLHAVIRLDRTFLLMILEKRTRSVLFLGKVVDPTKE.

Positions 1-20 are cleaved as a signal peptide; it reads MSMFFYLFLLVLGLQATIHC. N-linked (GlcNAc...) asparagine glycans are attached at residues N24, N39, N102, N168, N227, and N256. Residues N296 and K401 each contribute to the thyroxine site.

Belongs to the serpin family. Expressed by the liver and secreted in plasma.

The protein localises to the secreted. Its function is as follows. Major thyroid hormone transport protein in serum. The chain is Thyroxine-binding globulin (Serpina7) from Rattus norvegicus (Rat).